A 382-amino-acid polypeptide reads, in one-letter code: Queuine tRNA-ribosyltransferase (382 aa).

Catalysis depends on D94, which acts as the Proton acceptor. Substrate is bound by residues 94-98 (DSGGF), D148, Q192, and G219. The tract at residues 250–256 (GVGKPED) is RNA binding. Residue D269 is the Nucleophile of the active site. Residues 274–278 (TRNAR) are RNA binding; important for wobble base 34 recognition. Zn(2+)-binding residues include C307, C309, C312, and H338.

It belongs to the queuine tRNA-ribosyltransferase family. As to quaternary structure, homodimer. Within each dimer, one monomer is responsible for RNA recognition and catalysis, while the other monomer binds to the replacement base PreQ1. Requires Zn(2+) as cofactor.

The catalysed reaction is 7-aminomethyl-7-carbaguanine + guanosine(34) in tRNA = 7-aminomethyl-7-carbaguanosine(34) in tRNA + guanine. Its pathway is tRNA modification; tRNA-queuosine biosynthesis. Its function is as follows. Catalyzes the base-exchange of a guanine (G) residue with the queuine precursor 7-aminomethyl-7-deazaguanine (PreQ1) at position 34 (anticodon wobble position) in tRNAs with GU(N) anticodons (tRNA-Asp, -Asn, -His and -Tyr). Catalysis occurs through a double-displacement mechanism. The nucleophile active site attacks the C1' of nucleotide 34 to detach the guanine base from the RNA, forming a covalent enzyme-RNA intermediate. The proton acceptor active site deprotonates the incoming PreQ1, allowing a nucleophilic attack on the C1' of the ribose to form the product. After dissociation, two additional enzymatic reactions on the tRNA convert PreQ1 to queuine (Q), resulting in the hypermodified nucleoside queuosine (7-(((4,5-cis-dihydroxy-2-cyclopenten-1-yl)amino)methyl)-7-deazaguanosine). This chain is Queuine tRNA-ribosyltransferase, found in Haemophilus ducreyi (strain 35000HP / ATCC 700724).